The chain runs to 396 residues: MATAATATAGSRAAVLLLLSLALALALRPSDAGAGGDCHFPAVFNFGDSNSDTGGLSSLFGAAPPPNGRTFFGMPAGRYCDGRLVIDFIAESLGLTHLSAYLNSIGSNFTQGANFATAGSSIRRQNTSLFLSGFSPISLDVQFWEFEQFINRSQLVYNNKGGIYREILPRAEYFSQALYTFDIGQNDITSSYFVNNTTEEVEAIIPDLMERLTSIIQSVYSRGGRYFWIHNTGPLGCLPYALLHRPDLAIPADGTGCSVTYNKVAQLFNLRLKETVASLRKTHPDAAFTYVDVYTAKYKLISQANKLGFDDPLLTCCGYGGGRYNLDLSVGCGGKKQVNGTSVVVGKSCENPSKRVSWDGVHFTEAANKFVFDQIVAGALSDPPVALRQACHSRGQ.

An N-terminal signal peptide occupies residues 1–31; sequence MATAATATAGSRAAVLLLLSLALALALRPSD. Ser-49 functions as the Nucleophile in the catalytic mechanism. Asn-108, Asn-126, Asn-151, Asn-196, and Asn-339 each carry an N-linked (GlcNAc...) asparagine glycan. Residues Asp-359 and His-362 contribute to the active site.

Belongs to the 'GDSL' lipolytic enzyme family.

Its subcellular location is the secreted. Functionally, esterase that can hydrolyze acetylthiocholine and propionylthiocholine in vitro. Substrate preference is propionylthiocholine &gt; acetylthiocholine. Possesses extremely low activity against butyrylthiocholine. The polypeptide is GDSL esterase/lipase ACHE (Zea mays (Maize)).